The chain runs to 470 residues: Diaminobutyrate--2-oxoglutarate aminotransferase (470 aa).

K304 is subject to N6-(pyridoxal phosphate)lysine.

It belongs to the class-III pyridoxal-phosphate-dependent aminotransferase family. The cofactor is pyridoxal 5'-phosphate.

The catalysed reaction is L-2,4-diaminobutanoate + 2-oxoglutarate = L-aspartate 4-semialdehyde + L-glutamate. Its pathway is siderophore biosynthesis; rhizobactin biosynthesis. The protein is Diaminobutyrate--2-oxoglutarate aminotransferase (rhbA) of Rhizobium meliloti (strain 1021) (Ensifer meliloti).